The chain runs to 723 residues: Capsid protein (723 aa).

The disordered stretch occupies residues 658 to 679 (QATPPPFKKPRTEDQEENPEET).

The protein belongs to the anelloviridae capsid protein family.

Its subcellular location is the virion. Its function is as follows. Self assemble to form an icosahedral capsid. In Torque teno virus (isolate Japanese macaque/Japan/Mf-TTV9/2000) (TTV), this protein is Capsid protein.